A 231-amino-acid polypeptide reads, in one-letter code: Cytochrome c oxidase subunit 2 (231 aa).

Residues 1–14 (MATPAQLGLQNATS) are Mitochondrial intermembrane-facing. A helical membrane pass occupies residues 15 to 45 (PIMEELIAFHDHALMIIFLISSLVLYIISLM). Residues 46–59 (LTTKLTHTSTMNAQ) lie on the Mitochondrial matrix side of the membrane. The helical transmembrane segment at 60–87 (EIEMIWTILPAIILIMIALPSLRILYMT) threads the bilayer. Residues 88 to 231 (DEFNKPYLTL…WASYLYIVSL (144 aa)) lie on the Mitochondrial intermembrane side of the membrane. 6 residues coordinate Cu cation: H161, C196, E198, C200, H204, and M207. E198 lines the Mg(2+) pocket.

This sequence belongs to the cytochrome c oxidase subunit 2 family. In terms of assembly, component of the cytochrome c oxidase (complex IV, CIV), a multisubunit enzyme composed of 14 subunits. The complex is composed of a catalytic core of 3 subunits MT-CO1, MT-CO2 and MT-CO3, encoded in the mitochondrial DNA, and 11 supernumerary subunits COX4I, COX5A, COX5B, COX6A, COX6B, COX6C, COX7A, COX7B, COX7C, COX8 and NDUFA4, which are encoded in the nuclear genome. The complex exists as a monomer or a dimer and forms supercomplexes (SCs) in the inner mitochondrial membrane with NADH-ubiquinone oxidoreductase (complex I, CI) and ubiquinol-cytochrome c oxidoreductase (cytochrome b-c1 complex, complex III, CIII), resulting in different assemblies (supercomplex SCI(1)III(2)IV(1) and megacomplex MCI(2)III(2)IV(2)). Found in a complex with TMEM177, COA6, COX18, COX20, SCO1 and SCO2. Interacts with TMEM177 in a COX20-dependent manner. Interacts with COX20. Interacts with COX16. Requires Cu cation as cofactor.

It is found in the mitochondrion inner membrane. It carries out the reaction 4 Fe(II)-[cytochrome c] + O2 + 8 H(+)(in) = 4 Fe(III)-[cytochrome c] + 2 H2O + 4 H(+)(out). Component of the cytochrome c oxidase, the last enzyme in the mitochondrial electron transport chain which drives oxidative phosphorylation. The respiratory chain contains 3 multisubunit complexes succinate dehydrogenase (complex II, CII), ubiquinol-cytochrome c oxidoreductase (cytochrome b-c1 complex, complex III, CIII) and cytochrome c oxidase (complex IV, CIV), that cooperate to transfer electrons derived from NADH and succinate to molecular oxygen, creating an electrochemical gradient over the inner membrane that drives transmembrane transport and the ATP synthase. Cytochrome c oxidase is the component of the respiratory chain that catalyzes the reduction of oxygen to water. Electrons originating from reduced cytochrome c in the intermembrane space (IMS) are transferred via the dinuclear copper A center (CU(A)) of subunit 2 and heme A of subunit 1 to the active site in subunit 1, a binuclear center (BNC) formed by heme A3 and copper B (CU(B)). The BNC reduces molecular oxygen to 2 water molecules using 4 electrons from cytochrome c in the IMS and 4 protons from the mitochondrial matrix. This is Cytochrome c oxidase subunit 2 (MT-CO2) from Aotus nigriceps (Black-headed night monkey).